The chain runs to 297 residues: 4-hydroxy-tetrahydrodipicolinate synthase (297 aa).

Pyruvate is bound at residue Thr47. The active-site Proton donor/acceptor is the Tyr136. The active-site Schiff-base intermediate with substrate is Lys165. Position 206 (Ile206) interacts with pyruvate.

It belongs to the DapA family. In terms of assembly, homotetramer; dimer of dimers.

It is found in the cytoplasm. The catalysed reaction is L-aspartate 4-semialdehyde + pyruvate = (2S,4S)-4-hydroxy-2,3,4,5-tetrahydrodipicolinate + H2O + H(+). It functions in the pathway amino-acid biosynthesis; L-lysine biosynthesis via DAP pathway; (S)-tetrahydrodipicolinate from L-aspartate: step 3/4. Catalyzes the condensation of (S)-aspartate-beta-semialdehyde [(S)-ASA] and pyruvate to 4-hydroxy-tetrahydrodipicolinate (HTPA). In Campylobacter concisus (strain 13826), this protein is 4-hydroxy-tetrahydrodipicolinate synthase.